A 260-amino-acid polypeptide reads, in one-letter code: Indole-3-glycerol phosphate synthase (260 aa).

It belongs to the TrpC family.

The enzyme catalyses 1-(2-carboxyphenylamino)-1-deoxy-D-ribulose 5-phosphate + H(+) = (1S,2R)-1-C-(indol-3-yl)glycerol 3-phosphate + CO2 + H2O. It participates in amino-acid biosynthesis; L-tryptophan biosynthesis; L-tryptophan from chorismate: step 4/5. The sequence is that of Indole-3-glycerol phosphate synthase from Nocardioides sp. (strain ATCC BAA-499 / JS614).